Here is a 411-residue protein sequence, read N- to C-terminus: Acetate kinase (411 aa).

Mg(2+) is bound at residue Asn7. Position 14 (Lys14) interacts with ATP. Arg94 serves as a coordination point for substrate. Asp151 (proton donor/acceptor) is an active-site residue. Residues 211-215 (HLGNG), 285-287 (DMR), and 333-337 (GIGEN) each bind ATP. Position 387 (Glu387) interacts with Mg(2+).

It belongs to the acetokinase family. In terms of assembly, homodimer. Mg(2+) serves as cofactor. Mn(2+) is required as a cofactor.

The protein resides in the cytoplasm. It catalyses the reaction acetate + ATP = acetyl phosphate + ADP. It functions in the pathway metabolic intermediate biosynthesis; acetyl-CoA biosynthesis; acetyl-CoA from acetate: step 1/2. Its function is as follows. Catalyzes the formation of acetyl phosphate from acetate and ATP. Can also catalyze the reverse reaction. The sequence is that of Acetate kinase from Syntrophobacter fumaroxidans (strain DSM 10017 / MPOB).